The chain runs to 193 residues: MKKEIILASNSPRRIDLLKHMGVDFKVVSPNVEEEGNGEKRSPVEVVKKNAIMKVQKVAEDYRNAIIIGADTVVVIDGEIIGKPTNEKDARRILRKLRGRYHFVFSGVAVMETPEDKVLVSVVRSKVKMRDYSEEEIERYIATGEPMDKAGAYGIQGKGALLVEKIEGDYYNIVGLPLVRLNSLLNRLGYSLL.

Aspartate 71 functions as the Proton acceptor in the catalytic mechanism.

The protein belongs to the Maf family. YhdE subfamily. It depends on a divalent metal cation as a cofactor.

The protein resides in the cytoplasm. The enzyme catalyses dTTP + H2O = dTMP + diphosphate + H(+). The catalysed reaction is UTP + H2O = UMP + diphosphate + H(+). Nucleoside triphosphate pyrophosphatase that hydrolyzes dTTP and UTP. May have a dual role in cell division arrest and in preventing the incorporation of modified nucleotides into cellular nucleic acids. The polypeptide is dTTP/UTP pyrophosphatase (Dictyoglomus thermophilum (strain ATCC 35947 / DSM 3960 / H-6-12)).